The following is a 777-amino-acid chain: Protein translocase subunit SecA (777 aa).

Residues Gln94, 112 to 116 (GEGKT), and Asp501 each bind ATP.

It belongs to the SecA family. Monomer and homodimer. Part of the essential Sec protein translocation apparatus which comprises SecA, SecYEG and auxiliary proteins SecDF. Other proteins may also be involved.

It localises to the cell membrane. The protein localises to the cytoplasm. It carries out the reaction ATP + H2O + cellular proteinSide 1 = ADP + phosphate + cellular proteinSide 2.. Its function is as follows. Part of the Sec protein translocase complex. Interacts with the SecYEG preprotein conducting channel. Has a central role in coupling the hydrolysis of ATP to the transfer of proteins into and across the cell membrane, serving as an ATP-driven molecular motor driving the stepwise translocation of polypeptide chains across the membrane. This Mycobacterium avium (strain 104) protein is Protein translocase subunit SecA.